Consider the following 488-residue polypeptide: Acetyl-coenzyme A carboxylase carboxyl transferase subunit beta, chloroplastic (488 aa).

Residues 227 to 488 (LWIQCDNCYG…LHAFFPLNTN (262 aa)) form the CoA carboxyltransferase N-terminal domain. 4 residues coordinate Zn(2+): C231, C234, C247, and C250. The C4-type zinc-finger motif lies at 231-250 (CDNCYGLMYKKVKMNVCEQC).

The protein belongs to the AccD/PCCB family. As to quaternary structure, acetyl-CoA carboxylase is a heterohexamer composed of biotin carboxyl carrier protein, biotin carboxylase and 2 subunits each of ACCase subunit alpha and ACCase plastid-coded subunit beta (accD). The cofactor is Zn(2+). As to expression, accumulates in fatty acids synthesizing tissues such as embryos, expanding leaves, flower buds, flowers, and developing siliques.

The protein resides in the plastid. Its subcellular location is the chloroplast membrane. The protein localises to the chloroplast stroma. The catalysed reaction is N(6)-carboxybiotinyl-L-lysyl-[protein] + acetyl-CoA = N(6)-biotinyl-L-lysyl-[protein] + malonyl-CoA. The protein operates within lipid metabolism; malonyl-CoA biosynthesis; malonyl-CoA from acetyl-CoA: step 1/1. Its function is as follows. Component of the acetyl coenzyme A carboxylase (ACC) complex. Biotin carboxylase (BC) catalyzes the carboxylation of biotin on its carrier protein (BCCP) and then the CO(2) group is transferred by the transcarboxylase to acetyl-CoA to form malonyl-CoA. The polypeptide is Acetyl-coenzyme A carboxylase carboxyl transferase subunit beta, chloroplastic (Arabidopsis thaliana (Mouse-ear cress)).